The sequence spans 494 residues: Ketol-acid reductoisomerase (NADP(+)) (494 aa).

A KARI N-terminal Rossmann domain is found at 14–208 (LDQLGRCRFM…GGHRAGCLES (195 aa)). Residues 45-48 (CGAQ), arginine 68, arginine 76, serine 78, and 108-110 (DKQ) contribute to the NADP(+) site. Residue histidine 132 is part of the active site. NADP(+) is bound at residue glycine 158. KARI C-terminal knotted domains lie at 209–344 (SFVA…NYPE) and 345–487 (SDVE…MSDM). Mg(2+) is bound by residues aspartate 217, glutamate 221, glutamate 389, and glutamate 393. Serine 414 provides a ligand contact to substrate.

Belongs to the ketol-acid reductoisomerase family. Requires Mg(2+) as cofactor.

The enzyme catalyses (2R)-2,3-dihydroxy-3-methylbutanoate + NADP(+) = (2S)-2-acetolactate + NADPH + H(+). The catalysed reaction is (2R,3R)-2,3-dihydroxy-3-methylpentanoate + NADP(+) = (S)-2-ethyl-2-hydroxy-3-oxobutanoate + NADPH + H(+). It participates in amino-acid biosynthesis; L-isoleucine biosynthesis; L-isoleucine from 2-oxobutanoate: step 2/4. The protein operates within amino-acid biosynthesis; L-valine biosynthesis; L-valine from pyruvate: step 2/4. Functionally, involved in the biosynthesis of branched-chain amino acids (BCAA). Catalyzes an alkyl-migration followed by a ketol-acid reduction of (S)-2-acetolactate (S2AL) to yield (R)-2,3-dihydroxy-isovalerate. In the isomerase reaction, S2AL is rearranged via a Mg-dependent methyl migration to produce 3-hydroxy-3-methyl-2-ketobutyrate (HMKB). In the reductase reaction, this 2-ketoacid undergoes a metal-dependent reduction by NADPH to yield (R)-2,3-dihydroxy-isovalerate. The protein is Ketol-acid reductoisomerase (NADP(+)) of Aliivibrio fischeri (strain ATCC 700601 / ES114) (Vibrio fischeri).